A 79-amino-acid polypeptide reads, in one-letter code: uncharacterized protein (79 aa).

Low complexity predominate over residues 22 to 72; sequence NNNNNNNNNNNNNNNNNNNNNNNNNNNNNNNNNNNNNNNNNNNNNNNNNNN. The tract at residues 22-79 is disordered; that stretch reads NNNNNNNNNNNNNNNNNNNNNNNNNNNNNNNNNNNNNNNNNNNNNNNNNNNKRFFFFG.

This is an uncharacterized protein from Dictyostelium discoideum (Social amoeba).